The sequence spans 1463 residues: MSNSFEILMNQLGMPAEMRQAPALAQANIERVVVHKISKVWEFHFVFSNILPIEIFLELKKGLSEEFSKTGNKAVFEIKARSQEFSNQLLQSYYREAFSEGPCASQGFKSLYQNLQVRAEGNQLFIEGSEAIDKEHFKKNHLPNLAKQLEKFGFPTFNCQVEKNDVLTQEQEEAFHAENEQIVQAANEEALRAMEQLEQMAPPPAEEKPAFDFQAKKAAAKPKLDKAEITPMIEVTTEENRLVFEGVVFDVEQKVTRTGRVLINFKMTDYTSSFSMQKWVKNEEEAQKFDLIKKNSWLRVRGNVEMNNFTRDLTMNVQDLQEVVHYERKDLMPEGERRVEFHAHTNMSTMDALPEVEEIVATAAKWGHKAVAITDHGNVQSFPHGYKAAKKAGIQLIYGMEANIVEDRVPIVYNEVEMDLSEATYVVFDVETTGLSAIYNDLIQVAASKMYKGNVIAEFDEFINPGHPLSAFTTELTGITDDHVKNAKPLEQVLQEFQEFCKDTVLVAHNATFDVGFMNANYERHDLPKISQPVIDTLEFARNLYPEYKRHGLGPLTKRFGVALEHHHMANYDAEATGRLLFIFIKEVAEKHGVTDLARLNIDLISPDSYKKARIKHATIYVKNQVGLKNIFKLVSLSNTKYFEGVPRIPRTVLDAHREGLILGSACSEGEVFDVVVSQGVDAAVEVAKYYDFIEVMPPAIYAPLIAKEQVKDMEELQTIIKSLIEVGDRLGKPVLATGNVHYIEPEEEIYREIIVRSLGQGAMINRTIGHGEHAQPAPLPKAHFRTTNEMLDEFAFLGEELARKLVIENTNALAEIFESVEVVKGDLYTPFIDKAEETVAELTYKKAFEIYGNPLPDIVDLRIEKELTSILGNGFAVIYLASQMLVQRSNERGYLVGSRGSVGSSFVATMIGITEVNPLSPHYVCGQCQYSEFITDGSYGSGFDMPHKDCPNCGHKLSKNGQDIPFETFLGFDGDKVPDIDLNFSGEDQPSAHLDVRDIFGEEYAFRAGTVGTVAAKTAYGFVKGYERDYGKFYRDAEVERLAQGAAGVKRTTGQHPGGIVVIPNYMDVYDFTPVQYPADDVTAEWQTTHFNFHDIDENVLKLDVLGHDDPTMIRKLQDLSGIDPNKIPMDDEGVMALFSGTDVLGVTPEQIGTPTGMLGIPEFGTNFVRGMVDETHPTTFAELLQLSGLSHGTDVWLGNAQDLIKQGIADLSTVIGCRDDIMVYLMHAGLEPKMAFTIMERVRKGLWLKISEEERNGYIEAMKANKVPEWYIESCGKIKYMFPKAHAAAYVMMALRVAYFKVHHPIYYYCAYFSIRAKAFDIKTMGAGLEVIKRRMEEISEKRKNNEASNVEIDLYTTLEIVNEMWERGFKFGKLDLYCSQATEFLIDGDTLIPPFVAMDGLGENVAKQLVRAREEGEFLSKTELRKRGGLSSTLVEKMDEMGILGNMPEDNQLSLFDELF.

The Exonuclease domain occupies 425-581 (YVVFDVETTG…YDAEATGRLL (157 aa)).

This sequence belongs to the DNA polymerase type-C family. PolC subfamily.

The protein localises to the cytoplasm. The enzyme catalyses DNA(n) + a 2'-deoxyribonucleoside 5'-triphosphate = DNA(n+1) + diphosphate. Required for replicative DNA synthesis. This DNA polymerase also exhibits 3' to 5' exonuclease activity. This is DNA polymerase III PolC-type from Streptococcus pneumoniae serotype 4 (strain ATCC BAA-334 / TIGR4).